We begin with the raw amino-acid sequence, 179 residues long: Orotate phosphoribosyltransferase (179 aa).

Residues R94, K95, K98, H100, and 120-128 (EDTSTTGNS) contribute to the 5-phospho-alpha-D-ribose 1-diphosphate site. The orotate site is built by T124 and R152.

The protein belongs to the purine/pyrimidine phosphoribosyltransferase family. PyrE subfamily. Homodimer. Mg(2+) is required as a cofactor.

The enzyme catalyses orotidine 5'-phosphate + diphosphate = orotate + 5-phospho-alpha-D-ribose 1-diphosphate. The protein operates within pyrimidine metabolism; UMP biosynthesis via de novo pathway; UMP from orotate: step 1/2. In terms of biological role, catalyzes the transfer of a ribosyl phosphate group from 5-phosphoribose 1-diphosphate to orotate, leading to the formation of orotidine monophosphate (OMP). The protein is Orotate phosphoribosyltransferase of Mycobacterium avium (strain 104).